A 648-amino-acid chain; its full sequence is Replication restart protein PriA (648 aa).

Residues 131 to 297 (TILNESNKPT…EIGKYQLVTL (167 aa)) form the Helicase ATP-binding domain. 144-151 (GVTGSGKT) serves as a coordination point for ATP. A DEAH box motif is present at residues 240–243 (DEEH). Positions 358, 361, 367, 370, 385, 388, 398, and 401 each coordinate Zn(2+). A Helicase C-terminal domain is found at 393–548 (KIFSSCPECL…SFFANELEIR (156 aa)).

It belongs to the helicase family. PriA subfamily. In terms of assembly, component of the replication restart primosome. Requires Zn(2+) as cofactor.

It catalyses the reaction Couples ATP hydrolysis with the unwinding of duplex DNA by translocating in the 3'-5' direction.. The catalysed reaction is ATP + H2O = ADP + phosphate + H(+). Functionally, initiates the restart of stalled replication forks, which reloads the replicative helicase on sites other than the origin of replication. Recognizes and binds to abandoned replication forks and remodels them to uncover a helicase loading site. Promotes assembly of the primosome at these replication forks. In Rickettsia conorii (strain ATCC VR-613 / Malish 7), this protein is Replication restart protein PriA.